The primary structure comprises 270 residues: MSNVRSDKPFTLAGRTFQSRLLVGTGKYRDMEETRLATEASGAEIVTVAVRRTNLGQNAGEPNLLDVLSPDKYTILPNTAGCFDAVEAVRTCRLARELLDGRKSHESRTLVKLEVLADQKTLFPNVIETLKAAEVLVKEGFDVMVYTSDDPIIARQLAEVGCIAVMPLAGLIGTGLGICNPYNLQIILEESKVPVLVDAGVGTASDATIAMEMGCEAVLMNSAIAHAQQPVLMAEAMKHAIVAGRMAYLAGRMPKKLYASASSPLDGLIK.

The active-site Schiff-base intermediate with DXP is Lys112. 1-deoxy-D-xylulose 5-phosphate is bound by residues Gly173, 199–200 (AG), and 221–222 (NS).

This sequence belongs to the ThiG family. In terms of assembly, homotetramer. Forms heterodimers with either ThiH or ThiS.

The protein localises to the cytoplasm. The enzyme catalyses [ThiS sulfur-carrier protein]-C-terminal-Gly-aminoethanethioate + 2-iminoacetate + 1-deoxy-D-xylulose 5-phosphate = [ThiS sulfur-carrier protein]-C-terminal Gly-Gly + 2-[(2R,5Z)-2-carboxy-4-methylthiazol-5(2H)-ylidene]ethyl phosphate + 2 H2O + H(+). The protein operates within cofactor biosynthesis; thiamine diphosphate biosynthesis. Its function is as follows. Catalyzes the rearrangement of 1-deoxy-D-xylulose 5-phosphate (DXP) to produce the thiazole phosphate moiety of thiamine. Sulfur is provided by the thiocarboxylate moiety of the carrier protein ThiS. In vitro, sulfur can be provided by H(2)S. In Pseudomonas putida (strain ATCC 700007 / DSM 6899 / JCM 31910 / BCRC 17059 / LMG 24140 / F1), this protein is Thiazole synthase.